A 152-amino-acid polypeptide reads, in one-letter code: Transcriptional repressor NrdR (152 aa).

A zinc finger lies at 3–34; sequence CPFCGHADTQVVDSRVSEDGASIRRRRRCLEC. One can recognise an ATP-cone domain in the interval 49–139; it reads PQVVKQDGHR…VYRSFQDVAE (91 aa).

Belongs to the NrdR family. Requires Zn(2+) as cofactor.

Negatively regulates transcription of bacterial ribonucleotide reductase nrd genes and operons by binding to NrdR-boxes. The chain is Transcriptional repressor NrdR from Laribacter hongkongensis (strain HLHK9).